We begin with the raw amino-acid sequence, 3961 residues long: Hybrid PKS-NRPS synthetase phm1 (3961 aa).

A Ketosynthase family 3 (KS3) domain is found at 4 to 436 (SEPIAIIGSA…GTNAHAIVEA (433 aa)). Active-site for beta-ketoacyl synthase activity residues include C178, H317, and H356. The interval 541-867 (VFTGQGAQWP…RSKNDILELS (327 aa)) is malonyl-CoA:ACP transacylase (MAT) domain. The segment at 933 to 1068 (HPILGKRCLE…GTVTVTLAEP (136 aa)) is N-terminal hotdog fold. Positions 933-1234 (HPILGKRCLE…LELVPFTAAR (302 aa)) are dehydratase (DH) domain. A PKS/mFAS DH domain is found at 933-1236 (HPILGKRCLE…LVPFTAARPE (304 aa)). The Proton acceptor; for dehydratase activity role is filled by H966. The interval 1083-1236 (MTEIEVDRFY…LVPFTAARPE (154 aa)) is C-terminal hotdog fold. D1143 serves as the catalytic Proton donor; for dehydratase activity. Residues 1376–1569 (FDFYDQGLGL…GFGGIDTSTP (194 aa)) are methyltransferase (MT) domain. The interval 2106-2277 (TYLLIGMSGQ…GVPGSAISIS (172 aa)) is ketoreductase (KR) domain. Positions 2386–2464 (QAATIIKDGF…ELLQEAMDRT (79 aa)) constitute a Carrier 1 domain. S2424 carries the post-translational modification O-(pantetheine 4'-phosphoryl)serine. The interval 2482 to 2527 (PVTNTATPPPEVQVTGSASDSSRSLTPDGLSTSRPSTPVRTPMTEI) is disordered. Over residues 2495 to 2520 (VTGSASDSSRSLTPDGLSTSRPSTPV) the composition is skewed to polar residues. Positions 2553-2993 (PMSYGQARFW…DLPRWAGADV (441 aa)) are condensation (C) domain. The adenylation (A) (KR) domain stretch occupies residues 3019-3424 (QMIGTYASKP…DGALFVHGRI (406 aa)). The region spanning 3542–3616 (ANMEGRVAAL…GMARHVRAAF (75 aa)) is the Carrier 2 domain. S3576 is modified (O-(pantetheine 4'-phosphoryl)serine). Positions 3725 to 3871 (ITDIVFHCAA…VRPVSDVATT (147 aa)) are reductase (RED) domain.

The protein in the C-terminal section; belongs to the NRP synthetase family.

The protein operates within secondary metabolite biosynthesis. Its function is as follows. Hybrid PKS-NRPS synthetase; part of the gene cluster that mediates the biosynthesis of the trans-fused decalin-containing tetramic acid phomasetin, the stereochemical opposite of the HIV-1 integrase inhibitor equisetin. The PKS module of phm1 together with the enoylreductase phm4 catalyze the formation of the polyketide unit which is then conjugated to L-serine by the condensation domain of the phm1 NRPS module. Activity of the Dieckmann cyclase domain (RED) of phm1 results in release of the Dieckmann product intermediate. The Diels-Alderase phm7 then uses the Dieckmann product of phm1 as substrate and catalyzes the Diels-Alder cycloaddition to form the decalin ring of N-desmethylphomasetin. N-desmethylphomasetin is further methylated to phomasetin by the methyltransferase phm5. The sequence is that of Hybrid PKS-NRPS synthetase phm1 from Pyrenochaetopsis sp.